The primary structure comprises 305 residues: UDP-3-O-acyl-N-acetylglucosamine deacetylase (305 aa).

Residues His78, His237, and Asp241 each coordinate Zn(2+). His264 serves as the catalytic Proton donor.

Belongs to the LpxC family. Zn(2+) is required as a cofactor.

The catalysed reaction is a UDP-3-O-[(3R)-3-hydroxyacyl]-N-acetyl-alpha-D-glucosamine + H2O = a UDP-3-O-[(3R)-3-hydroxyacyl]-alpha-D-glucosamine + acetate. It functions in the pathway glycolipid biosynthesis; lipid IV(A) biosynthesis; lipid IV(A) from (3R)-3-hydroxytetradecanoyl-[acyl-carrier-protein] and UDP-N-acetyl-alpha-D-glucosamine: step 2/6. Functionally, catalyzes the hydrolysis of UDP-3-O-myristoyl-N-acetylglucosamine to form UDP-3-O-myristoylglucosamine and acetate, the committed step in lipid A biosynthesis. The polypeptide is UDP-3-O-acyl-N-acetylglucosamine deacetylase (Cupriavidus metallidurans (strain ATCC 43123 / DSM 2839 / NBRC 102507 / CH34) (Ralstonia metallidurans)).